A 394-amino-acid polypeptide reads, in one-letter code: MNKKSIRDVDLKGKRVFCRVDFNVPMKEGKITDETRIRAALPTIQYLVEQGAKVILASHLGRPKGQAVEELRLTPVAARLGELLGKDVKKADEAFGPVAQEMVAAMNEGDVLVLENVRFYAGEEKNDAELAKEFAALADIFVNDAFGAAHRAHASTAGIADYLPAVSGLLMEKELEVLGKALSNPERPFTAIIGGAKVKDKIGLIRHLLDKVDNLIIGGGLAYTFVKALGHEIGLSLCEDDKIELAKEFMQLAKEKGVNFYMPVDVVITEEFSETATTKIVGIDSIPSNWEGVDIGPKTREIYADVIKNSKLVVWNGPMGVFEMTPFAEGTKAVGQALADAEGTYSVIGGGDSAAAVEKFGMADKMSHISTGGGASLEFMEGKELPGVVCLNDK.

Substrate is bound by residues 21–23 (DFN), Arg-36, 59–62 (HLGR), Arg-118, and Arg-151. Residue Ser-183 is modified to Phosphoserine. Lys-201 and Gly-292 together coordinate ATP. Residue Thr-299 is modified to Phosphothreonine. Residues Glu-323 and 350–353 (GGDS) each bind ATP.

This sequence belongs to the phosphoglycerate kinase family. Monomer.

It is found in the cytoplasm. The catalysed reaction is (2R)-3-phosphoglycerate + ATP = (2R)-3-phospho-glyceroyl phosphate + ADP. It participates in carbohydrate degradation; glycolysis; pyruvate from D-glyceraldehyde 3-phosphate: step 2/5. This Bacillus anthracis (strain A0248) protein is Phosphoglycerate kinase.